Reading from the N-terminus, the 365-residue chain is DNA replication and repair protein RecF (365 aa).

30-37 (GLNGSGKT) provides a ligand contact to ATP.

The protein belongs to the RecF family.

It localises to the cytoplasm. Its function is as follows. The RecF protein is involved in DNA metabolism; it is required for DNA replication and normal SOS inducibility. RecF binds preferentially to single-stranded, linear DNA. It also seems to bind ATP. The polypeptide is DNA replication and repair protein RecF (Cellvibrio japonicus (strain Ueda107) (Pseudomonas fluorescens subsp. cellulosa)).